A 296-amino-acid polypeptide reads, in one-letter code: Fructose-bisphosphate aldolase class 1 (296 aa).

Glu175 acts as the Proton acceptor in catalysis. Lys212 serves as the catalytic Schiff-base intermediate with dihydroxyacetone-P.

The protein belongs to the class I fructose-bisphosphate aldolase family.

It carries out the reaction beta-D-fructose 1,6-bisphosphate = D-glyceraldehyde 3-phosphate + dihydroxyacetone phosphate. Its pathway is carbohydrate degradation; glycolysis; D-glyceraldehyde 3-phosphate and glycerone phosphate from D-glucose: step 4/4. The protein is Fructose-bisphosphate aldolase class 1 of Staphylococcus aureus (strain USA300).